The primary structure comprises 145 residues: Maximins 5/H4 type 1 (145 aa).

The N-terminal stretch at 1-18 (MNFKYIVAVSFLIASAYA) is a signal peptide. 2 consecutive propeptides follow at residues 19–43 (RSVQNDEQSLSQRDVLEEESLREIR) and 74–124 (TAEE…KEKR). Leu-144 bears the Leucine amide mark.

It belongs to the bombinin family. In terms of tissue distribution, expressed by the skin glands.

The protein localises to the secreted. Maximin-5 shows antibacterial activity against both Gram-positive and Gram-negative bacteria. The only exception is the resistance of E.coli. Also shows antimicrobial activity against fungi C.albicans, A.flavus and P.uticale. It has little hemolytic activity. It does not possess a significant cytotoxicity against tumor cell lines. It does not possess a significant anti-HIV activity. Its function is as follows. Maximin-H4 shows antibacterial activity against both Gram-positive and Gram-negative bacteria. It also shows antimicrobial activity against the fungus C.albicans. Shows strong hemolytic activity. The protein is Maximins 5/H4 type 1 of Bombina maxima (Giant fire-bellied toad).